The primary structure comprises 228 residues: Leucyl/phenylalanyl-tRNA--protein transferase (228 aa).

This sequence belongs to the L/F-transferase family.

It localises to the cytoplasm. It catalyses the reaction N-terminal L-lysyl-[protein] + L-leucyl-tRNA(Leu) = N-terminal L-leucyl-L-lysyl-[protein] + tRNA(Leu) + H(+). The catalysed reaction is N-terminal L-arginyl-[protein] + L-leucyl-tRNA(Leu) = N-terminal L-leucyl-L-arginyl-[protein] + tRNA(Leu) + H(+). It carries out the reaction L-phenylalanyl-tRNA(Phe) + an N-terminal L-alpha-aminoacyl-[protein] = an N-terminal L-phenylalanyl-L-alpha-aminoacyl-[protein] + tRNA(Phe). Functionally, functions in the N-end rule pathway of protein degradation where it conjugates Leu, Phe and, less efficiently, Met from aminoacyl-tRNAs to the N-termini of proteins containing an N-terminal arginine or lysine. This Lawsonia intracellularis (strain PHE/MN1-00) protein is Leucyl/phenylalanyl-tRNA--protein transferase.